A 419-amino-acid chain; its full sequence is UDP-N-acetylglucosamine 1-carboxyvinyltransferase (419 aa).

Phosphoenolpyruvate is bound at residue 22–23 (KN). UDP-N-acetyl-alpha-D-glucosamine is bound at residue Arg-93. Cys-117 acts as the Proton donor in catalysis. Cys-117 carries the post-translational modification 2-(S-cysteinyl)pyruvic acid O-phosphothioketal. 2 residues coordinate UDP-N-acetyl-alpha-D-glucosamine: Asp-307 and Ile-329.

Belongs to the EPSP synthase family. MurA subfamily.

It is found in the cytoplasm. It catalyses the reaction phosphoenolpyruvate + UDP-N-acetyl-alpha-D-glucosamine = UDP-N-acetyl-3-O-(1-carboxyvinyl)-alpha-D-glucosamine + phosphate. The protein operates within cell wall biogenesis; peptidoglycan biosynthesis. Functionally, cell wall formation. Adds enolpyruvyl to UDP-N-acetylglucosamine. The sequence is that of UDP-N-acetylglucosamine 1-carboxyvinyltransferase from Shewanella putrefaciens (strain CN-32 / ATCC BAA-453).